Consider the following 392-residue polypeptide: Extracellular metalloproteinase 4 (392 aa).

Residues Val1–Ser9 constitute a propeptide that is removed on maturation. The N-linked (GlcNAc...) asparagine glycan is linked to Asn176. Residue His193 participates in Zn(2+) binding. Glu194 is a catalytic residue. His197 contacts Zn(2+). Asn359 and Asn385 each carry an N-linked (GlcNAc...) asparagine glycan.

It belongs to the peptidase M36 family. Zn(2+) is required as a cofactor.

Its subcellular location is the secreted. Functionally, secreted metalloproteinase probably acting as a virulence factor. This chain is Extracellular metalloproteinase 4 (MEP4), found in Trichophyton soudanense.